Here is a 591-residue protein sequence, read N- to C-terminus: Lysyl oxidase homolog 1 (591 aa).

A signal peptide spans 1 to 22; the sequence is MALALTGWQLVWGACVCVLVHG. Positions 23 to 91 are excised as a propeptide; the sequence is QQAPPGQGSD…PRRRGGLRRR (69 aa). 2 disordered regions span residues 77-107 and 233-373; these read APQA…SDTV and EYGG…RLSV. Basic residues predominate over residues 82-92; the sequence is PRRRGGLRRRQ. Residues 298–313 show a composition bias toward gly residues; it reads NGGGGGGTYGGGGGDP. The segment at 319–386 is interaction with FBLN5; sequence PPYGNMPPEA…YRPNQNGRGL (68 aa). A lysyl-oxidase like region spans residues 387–591; that stretch reads PDLVPDPNYV…STTNCKIVQS (205 aa). Cystine bridges form between cysteine 412–cysteine 418, cysteine 465–cysteine 514, cysteine 498–cysteine 504, cysteine 525–cysteine 535, and cysteine 572–cysteine 586. Histidine 466, histidine 468, and histidine 470 together coordinate Cu cation. The segment at residues 494-529 is a cross-link (lysine tyrosylquinone (Lys-Tyr)); it reads KASFCLEDSTCDFGNLKRYACTSHTQGLSPGCYDTY. A 2',4',5'-topaquinone modification is found at tyrosine 529.

Belongs to the lysyl oxidase family. In terms of assembly, interacts (via propeptide) with EFEMP2. Interacts with FBLN5. The cofactor is Cu cation. It depends on lysine tyrosylquinone residue as a cofactor. In terms of processing, the lysine tyrosylquinone cross-link (LTQ) is generated by condensation of the epsilon-amino group of a lysine with a topaquinone produced by oxidation of tyrosine. Proteolytic processing by a furin-like protease causes removal of N-terminal propeptide resulting in an enzyme largely inactive, but further proteolytic processing by BMP1 results in enzyme activation.

It is found in the secreted. It localises to the extracellular space. The protein resides in the extracellular matrix. It carries out the reaction L-lysyl-[protein] + O2 + H2O = (S)-2-amino-6-oxohexanoyl-[protein] + H2O2 + NH4(+). Its function is as follows. Catalyzes the oxidative deamination of lysine and hydroxylysine residues in collagen and elastin, resulting in the formation of covalent cross-linkages, and the stabilization of collagen and elastin fibers. Essential for the elastic fiber homeostasis and for their maintenance at adult age. The polypeptide is Lysyl oxidase homolog 1 (LOXL1) (Bos taurus (Bovine)).